A 32-amino-acid chain; its full sequence is Ranatuerin-3 (32 aa).

Residues Cys23 and Cys28 are joined by a disulfide bond.

The protein belongs to the frog skin active peptide (FSAP) family. Ranatuerin subfamily. Expressed by the skin glands.

Its subcellular location is the secreted. In terms of biological role, antibacterial activity against Gram-positive bacterium S.aureus (MIC=60 uM). Shows no detectable hemolytic activity towards human erythrocytes. The polypeptide is Ranatuerin-3 (Aquarana catesbeiana (American bullfrog)).